We begin with the raw amino-acid sequence, 440 residues long: Damage-control phosphatase ARMT1 (440 aa).

Positions 252 and 253 each coordinate Mn(2+). Residue 252-253 coordinates substrate; the sequence is DN. Residues glutamate 257 and aspartate 290 each coordinate S-adenosyl-L-methionine. Aspartate 290 contacts Mn(2+). Substrate contacts are provided by residues 366-370 and lysine 403; that span reads DLNYR. A Subfamily III RTxK motif motif is present at residues 400–403; sequence RTLK.

Belongs to the damage-control phosphatase family. Sugar phosphate phosphatase III subfamily. Mn(2+) serves as cofactor. Ni(2+) is required as a cofactor. Post-translationally, automethylated.

It catalyses the reaction beta-D-fructose 1-phosphate + H2O = D-fructose + phosphate. It carries out the reaction beta-D-fructose 6-phosphate = dihydroxyacetone + D-glyceraldehyde 3-phosphate. The catalysed reaction is L-glutamyl-[protein] + S-adenosyl-L-methionine = [protein]-L-glutamate 5-O-methyl ester + S-adenosyl-L-homocysteine. In terms of biological role, metal-dependent phosphatase that shows phosphatase activity against several substrates, including fructose-1-phosphate and fructose-6-phosphate. Its preference for fructose-1-phosphate, a strong glycating agent that causes DNA damage rather than a canonical yeast metabolite, suggests a damage-control function in hexose phosphate metabolism. Has also been shown to have O-methyltransferase activity that methylates glutamate residues of target proteins to form gamma-glutamyl methyl ester residues. Possibly methylates PCNA, suggesting it is involved in the DNA damage response. The chain is Damage-control phosphatase ARMT1 from Xenopus tropicalis (Western clawed frog).